The primary structure comprises 760 residues: MLARSVRTLVVSPKTVFRFRGCLFEKHVSTASADDRAIVSLFDSPHAAFKYPSTISTGLFGHSQLSHPNAFISLAEATLVRAQLLTDRILRARSSRDELLKVVKNLDRLSDMLCSVIDLAELIRNAHPDRNWATAGHHVYEQLCEFMNVLNTHVGLYEVLKLVLADASIVKTLSPEAYQTALIFWRDFEKSAINLPPEERQKFVSLSSDILVLGREFLENANAPRPPASIKPEHMVGIKDKGLGVRLQLQAQFTRRDLLVYPGSLQAQMIMRSAPDEEPRRRMYIAANSSTDQQIXTLERLLKTRAELARLVGRSSFAHMTLDDKMAKTPENVMNFLGALIGQTRPFARRALKTLSARKQAHHGLSSLPTIQAWDRDFYCPPEPPAPPIPLPPLTLGTIFMGLSRLFKYLYGITLRPTEAQTGEVWHSDVHKLEVIDEDKGLIGWIYADLFARHGKSSGAAHYTVRCSRRTDLDDDLGDGGLTGHEELIQQNLEFEKVKRHKIPNQDGVYQLPLVVLLCEFTRPSVLKGATVLEWHDVMTLFHEMGHAMLAMVGRTEYQNVSGTRCATDFVELPSILMEHFLSSPVVLSLFDLDGTHSLRQVGNTHEDPCHSIDTFSQIILASLDQIYHSPAVLDNSTFSTTDELENLTVSKGVIPHVPSTSFQTQFGHLFGYGATYYSYLFDRAIASRVWKKVFEKDPLKREVGEKYKLEVLRWGGGRDPWKMVSKLLDASELEKGDAEAMREVGRWRIEDEVGLPGRH.

The N-terminal 19 residues, 1–19, are a transit peptide targeting the mitochondrion; that stretch reads MLARSVRTLVVSPKTVFRF. H543 lines the Zn(2+) pocket. E544 is an active-site residue. H547 is a Zn(2+) binding site.

This sequence belongs to the peptidase M3 family. Requires Zn(2+) as cofactor.

The protein localises to the mitochondrion matrix. The catalysed reaction is Release of an N-terminal octapeptide as second stage of processing of some proteins imported into the mitochondrion.. Its function is as follows. Cleaves proteins, imported into the mitochondrion, to their mature size. While most mitochondrial precursor proteins are processed to the mature form in one step by mitochondrial processing peptidase (MPP), the sequential cleavage by MIP of an octapeptide after initial processing by MPP is a required step for a subgroup of nuclear-encoded precursor proteins destined for the matrix or the inner membrane. This chain is Mitochondrial intermediate peptidase (OCT1), found in Leucoagaricus gongylophorus (Leaf-cutting ant fungus).